The chain runs to 1728 residues: Nebulin-related-anchoring protein (1728 aa).

One can recognise an LIM zinc-binding domain in the interval 4–64 (QACSRCGYGV…HAHNPKNNTF (61 aa)). Nebulin repeat units lie at residues 173–200 (TPAYQRAKAANQLASQVQYKRGHDERVS), 201–235 (TFTPVADTPELLRAKAGGQLQNDVRYTEDGGQQRG), 244–271 (TPAYQIAKRATELASDVRYHQQYHREMK), 313–340 (TPAYQNAKKANELVSDIKYRQDFHKMKG), 345–379 (HSLAAQDNLVLKRAQSVSKLVSEVEYKKGLENSKG), 386–414 (ETPQFRNVSKISKFTSDNKYKENYQTQLR), 416–450 (HYDGVGMDRRMLHALKVGSLASNVAYKADYKHDVV), 484–518 (KFSSVTNTPQIVQAKINAQQLSHVNYRADYERNKL), 519–553 (NYTLPQDAPQLLKAKANAELFSEVKYKEGWQKTKG), 555–589 (GFEMKLDAMSLLAAKASGELASSVKYKEEYEKMKG), 599–623 (LLHSLQVAKMSSEVEYKKGFEESKT), 624–658 (HFNLPMDMVNLRHAKKAQALASDLDYRKKLHDYTV), 659–689 (LPEDMKTQWAKKAYGLQSELQYKADLAWMRG), 699–721 (NLEQAKKAGQLISEKNYRQRVDE), 723–757 (KFTSVADSSQMEHAKKSQGLQNAVAYKAGNEQSVH), 758–792 (QYTISKDEPLFLRARANAAQLSETLYKSSWEKQKA), 794–828 (GFELRLDSLAFLTAKAKRDLASEVKYKEDYERSRG), 841–866 (QMSHSLQMSKLQSDLEYKKGFEDTRS), 867–893 (QCHISLDMVHLVHARQAQHLATDVGYR), 898–932 (CFTALPTDMKVEWAKKAYGLQSDNQYRADMKWMKG), 943–960 (VEQAKKAGELISEKKYRQ), 966–1000 (KFTSIKDTPEMVQARISYTQAVDRLYREQGENVKH), 1001–1035 (HYTQTADLPEVLLAKLNAMNISETRYKESWSRLRD), 1037–1071 (GYKLRLDALPFQAAKASSEVISDYKYKEAFERMKG), 1075–1109 (GSRSLEDDLSLAHSVHATSLQSDVNYKKGFEHAKA), 1110–1136 (HFHLPLDMVTLVHAKKAQTLASDQDYR), 1141–1175 (QHTVLAEDLRLSCAKKAHKLQSENLYRSDLNFMRG), 1180–1203 (VPGTLEIEGRKKASELISESKYRQ), 1209–1243 (KYTAVTDTPNLLHAKYSNQITNERLYKAAGEDARH), 1244–1278 (QYTMTLGLPEFIRAKTNAANLSEAKYKEAWHNLRA), 1280–1314 (GYKLTIDALPFQAARASGDIASDFLYRHEFVKERG), 1318–1352 (GVRNVSDDPRLLHCLRMGQLQSENQYRKEAASSQA), 1353–1379 (QCHLPMDMMYLVHARKAQALASDHDYR), 1384–1418 (EFTALPEDLKMAWAKKAHALQSEFRYKADLMGMKG), 1425–1446 (QSPQIESAKKAGDLISETKYRK), 1452–1478 (KFTTVVDSPDLIHAKESYMHCNERLYR), 1487–1521 (RYTPIPDHPDFTRARMNAMHLSDKVYRNAWEQSRA), 1523–1557 (GYDFRLDAIPFQTARVSRDIASDFRYKEAFLRDRG), 1561–1595 (GYRSISDDPRTTHFLRVGRLQSDNEYRKAFAKGRS), 1596–1630 (QFHSRADQPGFLQAKRSQQLASDVLYRQPLPQHTS), and 1637–1661 (LKHARKAHQLQSDVKYKSDLNLTRG). A Phosphothreonine modification is found at Thr203. Ser1078 bears the Phosphoserine mark.

Interacts with actin, alpha-actinin, KLHL41, TLN1 and VCL. Interacts with CSRP3. As to expression, expressed in cardiac and skeletal muscle. Not detected in kidney, spleen, liver, brain, lung, stomach or uterus.

May be involved in anchoring the terminal actin filaments in the myofibril to the membrane and in transmitting tension from the myofibrils to the extracellular matrix. In Mus musculus (Mouse), this protein is Nebulin-related-anchoring protein.